The primary structure comprises 423 residues: MNTAAGPTGTAAGGTTAPAAAHDLSRAGRRLQLTRAAQWFAGNQGDPYGMILRAGTADPAPYEEEIRERGPLFHSELLGTWVTGSRHVADAVTADDAFGALTADGARPGVRELPLSGSALDAAHGNPGGPPLPGGWPHRPPDREERDDPDRHAADLLNAAGPGQVLDLVPFARRLAARTTGAWLGVPAERLPRFETALTGCRRALDALLCPQLLADARAGLAAEEALRAVLGETPEARGRPPGAVEAARAHAVSAAEPIAVLLCNAVRELMERPAQWRALTADPGLAGAAITETLLWAPPVRLESRVARETAVLAGRTLPAGTHLVVLAAAANRDACRNAGPAVTGFDVLRRASDGGPQPHGLPEDLHFRLSGPLVRRTAEAGLRALAERFPGLRPAGPAVRVRRSPVLRGLGRLPVAPYVPE.

The span at methionine 1–alanine 21 shows a compositional bias: low complexity. 2 disordered regions span residues methionine 1–arginine 26 and glycine 117–proline 149. The segment covering arginine 139 to proline 149 has biased composition (basic and acidic residues).

The protein belongs to the cytochrome P450 family.

The protein operates within antibiotic biosynthesis; tylosin biosynthesis. Functionally, involved in the biosynthesis of the macrolide antibiotic tylosin derived from the polyketide lactone tylactone. TylM3 is required for the glycosylation of the 5-hydroxyl group of tylactone to yield 5-O-mycaminosytylactone. The protein is Protein TylM3 of Streptomyces fradiae (Streptomyces roseoflavus).